The following is a 175-amino-acid chain: MSTLNKLQRPARSWHRKKRVGRGQGSGLGKTAGRGGKGQKARTGNMRFEGFEGGQSPLQRRLPKFGFTPPNRTVYAVVNLSDLEQHFDAGATADVETLRKVGLVKGRYHGVKLLARGELTKKVTVVVHKASEAAKAAIQKAGGAVEEIPLVAHKPESAAKAHAGKGVKAPRQPKA.

2 disordered regions span residues 1-65 (MSTL…LPKF) and 155-175 (PESA…QPKA). Positions 12-21 (RSWHRKKRVG) are enriched in basic residues. Over residues 22-38 (RGQGSGLGKTAGRGGKG) the composition is skewed to gly residues. A compositionally biased stretch (low complexity) spans 160–169 (KAHAGKGVKA).

The protein belongs to the universal ribosomal protein uL15 family. As to quaternary structure, part of the 50S ribosomal subunit.

Binds to the 23S rRNA. In Myxococcus xanthus (strain DK1622), this protein is Large ribosomal subunit protein uL15.